We begin with the raw amino-acid sequence, 313 residues long: Oxaloacetate tautomerase Fahd2a, mitochondrial (313 aa).

The transit peptide at 1 to 84 (MLGSGRRRLL…TALSVARRAL (84 aa)) directs the protein to the mitochondrion. Positions 159, 161, and 190 each coordinate Mg(2+). K202 is subject to N6-acetyllysine; alternate. K202 carries the N6-succinyllysine; alternate modification. An N6-acetyllysine modification is found at K233.

It belongs to the FAH family. Mg(2+) serves as cofactor. It depends on Mn(2+) as a cofactor.

It localises to the mitochondrion. The catalysed reaction is oxaloacetate = enol-oxaloacetate. Its function is as follows. Tautomerase that converts enol-oxaloacetate, a strong inhibitor of succinate dehydrogenase, to the physiological keto form of oxaloacetate. It is thereby required to maximize aerobic respiration efficiency by preventing succinate dehydrogenase inhibition. The sequence is that of Oxaloacetate tautomerase Fahd2a, mitochondrial from Rattus norvegicus (Rat).